Consider the following 776-residue polypeptide: Protein translocase subunit SecA 2 (776 aa).

Residues Gln-80, 98–102 (GEGKT), and Asp-486 contribute to the ATP site.

Belongs to the SecA family. As to quaternary structure, monomer and homodimer. Part of the essential Sec protein translocation apparatus which comprises SecA, SecYEG and auxiliary proteins SecDF. Other proteins may also be involved.

The protein resides in the cell membrane. It localises to the cytoplasm. It catalyses the reaction ATP + H2O + cellular proteinSide 1 = ADP + phosphate + cellular proteinSide 2.. Part of the Sec protein translocase complex. Interacts with the SecYEG preprotein conducting channel. Has a central role in coupling the hydrolysis of ATP to the transfer of proteins into and across the cell membrane, serving as an ATP-driven molecular motor driving the stepwise translocation of polypeptide chains across the membrane. The polypeptide is Protein translocase subunit SecA 2 (Listeria innocua serovar 6a (strain ATCC BAA-680 / CLIP 11262)).